The sequence spans 396 residues: MSKTIAINAGSSSLKWQLYQMPEETVLAQGIIERIGLKDSISTVKFNGNKEEQVTDIPDHTTAVKILLNDLIHLNIISAYDEITGVGHRIVAGGEYFTDSVLVDEKVIEQVEELSALAPLHNPGAAAGIRAFREILPDITSVCVFDNAFHMTMQKHTYLYPIPQKYYTEHKVRKYGAHGTSHKYVAQEAAKMLGRPLEELKLITAHIGNGVSITANYHGQSVDTSMGFTPLAGPMMGTRSGDIDPAIIPYIIERDPELKDAADAINMLNKKSGLGGVSGISSDMRDIEAGLQEKNPDAVLAYNIFIDRIKKFIGQYFAVLNGADALVFTAGMGENAPLMRQDVINGMSWFGMEIDPEKNVFGYRGDISTPNSKVKVLVISTDEELCIARDVERLKK.

Residue N8 participates in Mg(2+) binding. ATP is bound at residue K15. Residue R89 participates in substrate binding. Catalysis depends on D146, which acts as the Proton donor/acceptor. ATP contacts are provided by residues 206 to 210 (HIGNG), 283 to 285 (DMR), and 331 to 335 (GMGEN). E383 provides a ligand contact to Mg(2+).

It belongs to the acetokinase family. As to quaternary structure, homodimer. Mg(2+) is required as a cofactor. Mn(2+) serves as cofactor.

It localises to the cytoplasm. It catalyses the reaction acetate + ATP = acetyl phosphate + ADP. The protein operates within metabolic intermediate biosynthesis; acetyl-CoA biosynthesis; acetyl-CoA from acetate: step 1/2. In terms of biological role, catalyzes the formation of acetyl phosphate from acetate and ATP. Can also catalyze the reverse reaction. The sequence is that of Acetate kinase from Streptococcus uberis (strain ATCC BAA-854 / 0140J).